The chain runs to 221 residues: Jacalin-related lectin 47 (221 aa).

2 Jacalin-type lectin domains span residues 1–64 (MDSN…YYYP) and 71–217 (SEKL…HVLP).

Belongs to the jacalin lectin family.

This Arabidopsis thaliana (Mouse-ear cress) protein is Jacalin-related lectin 47 (JAL47).